Reading from the N-terminus, the 136-residue chain is Probable acyltransferase SID5 (136 aa).

The protein operates within siderophore biosynthesis. Its function is as follows. Probable acyltransferase; part of the gene cluster that mediates the biosynthesis of hydroxamate-containing siderophores that play a critical role in virulence via intracellular iron acquisition during macrophage infection. This is Probable acyltransferase SID5 from Ajellomyces capsulatus (Darling's disease fungus).